Reading from the N-terminus, the 313-residue chain is uncharacterized protein (313 aa).

The region spanning 6–152 is the N-acetyltransferase domain; the sequence is YDILENPEPN…YHASMEKMTG (147 aa).

Its function is as follows. To the C-terminal of C.elegans F21C10.9. This is an uncharacterized protein from Caenorhabditis elegans.